We begin with the raw amino-acid sequence, 156 residues long: ATP synthase subunit b (156 aa).

A helical transmembrane segment spans residues 12 to 32 (VAFLIFVLFCMKYVWPPVITA).

The protein belongs to the ATPase B chain family. As to quaternary structure, F-type ATPases have 2 components, F(1) - the catalytic core - and F(0) - the membrane proton channel. F(1) has five subunits: alpha(3), beta(3), gamma(1), delta(1), epsilon(1). F(0) has three main subunits: a(1), b(2) and c(10-14). The alpha and beta chains form an alternating ring which encloses part of the gamma chain. F(1) is attached to F(0) by a central stalk formed by the gamma and epsilon chains, while a peripheral stalk is formed by the delta and b chains.

It localises to the cell inner membrane. F(1)F(0) ATP synthase produces ATP from ADP in the presence of a proton or sodium gradient. F-type ATPases consist of two structural domains, F(1) containing the extramembraneous catalytic core and F(0) containing the membrane proton channel, linked together by a central stalk and a peripheral stalk. During catalysis, ATP synthesis in the catalytic domain of F(1) is coupled via a rotary mechanism of the central stalk subunits to proton translocation. Functionally, component of the F(0) channel, it forms part of the peripheral stalk, linking F(1) to F(0). The protein is ATP synthase subunit b of Pseudomonas putida (strain ATCC 700007 / DSM 6899 / JCM 31910 / BCRC 17059 / LMG 24140 / F1).